Consider the following 418-residue polypeptide: Tyrosine--tRNA ligase (418 aa).

Tyrosine 34 contributes to the L-tyrosine binding site. A 'HIGH' region motif is present at residues 39-48 (PTADSLHLGH). Residues tyrosine 169 and glutamine 173 each coordinate L-tyrosine. A 'KMSKS' region motif is present at residues 229-233 (KFGKS). Position 232 (lysine 232) interacts with ATP. The S4 RNA-binding domain maps to 352–418 (LNIVDMLVTA…GKKKYAVLTY (67 aa)).

The protein belongs to the class-I aminoacyl-tRNA synthetase family. TyrS type 1 subfamily. In terms of assembly, homodimer.

The protein resides in the cytoplasm. It carries out the reaction tRNA(Tyr) + L-tyrosine + ATP = L-tyrosyl-tRNA(Tyr) + AMP + diphosphate + H(+). Functionally, catalyzes the attachment of tyrosine to tRNA(Tyr) in a two-step reaction: tyrosine is first activated by ATP to form Tyr-AMP and then transferred to the acceptor end of tRNA(Tyr). The polypeptide is Tyrosine--tRNA ligase (Streptococcus equi subsp. zooepidemicus (strain H70)).